A 66-amino-acid chain; its full sequence is VILLMSTQALIQSGVEKRSNKIKALSKRKTTAESWWEGECYGWWTSCSSPEQCCSLNCENIYCRAW.

The first 9 residues, 1–9 (VILLMSTQA), serve as a signal peptide directing secretion. The propeptide occupies 10–38 (LIQSGVEKRSNKIKALSKRKTTAESWWEG). 3 disulfides stabilise this stretch: Cys40/Cys54, Cys47/Cys58, and Cys53/Cys63.

This sequence belongs to the conotoxin O2 superfamily. As to expression, expressed by the venom duct.

Its subcellular location is the secreted. This Conus tessulatus (Tessellate cone) protein is Conotoxin TsMEKL-03.